A 255-amino-acid chain; its full sequence is Microfibril-associated glycoprotein 4 (255 aa).

The N-terminal stretch at 1–21 is a signal peptide; the sequence is MKALLALPLLLLLSTPPCAPQ. A Cell attachment site motif is present at residues 26–28; sequence RGD. Residues 32 to 255 form the Fibrinogen C-terminal domain; sequence RFCLQQPLDC…KRTEMKIRRA (224 aa). N87 and N137 each carry an N-linked (GlcNAc...) asparagine glycan.

As to quaternary structure, homodimer. Can also form higher oligomers. Interacts with FBN1, FBN2 and LOX. Interacts with COL1A1 in a Ca (2+)-dependent manner. Interacts with ELN in a Ca (2+)-dependent manner; this interaction promotes ELN self-assembly.

The protein resides in the secreted. It is found in the extracellular space. Its subcellular location is the extracellular matrix. In terms of biological role, could be involved in calcium-dependent cell adhesion or intercellular interactions. May contribute to the elastic fiber assembly and/or maintenance. The protein is Microfibril-associated glycoprotein 4 (MFAP4) of Homo sapiens (Human).